A 162-amino-acid chain; its full sequence is Phosphopantetheine adenylyltransferase (162 aa).

S11 provides a ligand contact to substrate. Residues 11-12 and H19 contribute to the ATP site; that span reads SF. Substrate is bound by residues K43, L75, and R89. Residues 90–92, E100, and 125–131 contribute to the ATP site; these read GLR and YSYLSSS.

This sequence belongs to the bacterial CoaD family. In terms of assembly, homohexamer. Mg(2+) is required as a cofactor.

Its subcellular location is the cytoplasm. The enzyme catalyses (R)-4'-phosphopantetheine + ATP + H(+) = 3'-dephospho-CoA + diphosphate. Its pathway is cofactor biosynthesis; coenzyme A biosynthesis; CoA from (R)-pantothenate: step 4/5. In terms of biological role, reversibly transfers an adenylyl group from ATP to 4'-phosphopantetheine, yielding dephospho-CoA (dPCoA) and pyrophosphate. The sequence is that of Phosphopantetheine adenylyltransferase from Geotalea uraniireducens (strain Rf4) (Geobacter uraniireducens).